The primary structure comprises 75 residues: DNA-directed RNA polymerase subunit epsilon (75 aa).

It belongs to the RNA polymerase subunit epsilon family. RNAP is composed of a core of 2 alpha, a beta and a beta' subunit. The core is associated with a delta subunit, and at least one of epsilon or omega. When a sigma factor is associated with the core the holoenzyme is formed, which can initiate transcription.

The catalysed reaction is RNA(n) + a ribonucleoside 5'-triphosphate = RNA(n+1) + diphosphate. Its function is as follows. A non-essential component of RNA polymerase (RNAP). The chain is DNA-directed RNA polymerase subunit epsilon from Lactobacillus gasseri (strain ATCC 33323 / DSM 20243 / BCRC 14619 / CIP 102991 / JCM 1131 / KCTC 3163 / NCIMB 11718 / NCTC 13722 / AM63).